The chain runs to 207 residues: Sodium/potassium-transporting ATPase subunit beta-1-interacting protein 1 (207 aa).

The signal sequence occupies residues 1–21; the sequence is MGKCSGRCTLVAFCCLQLVAA. Residues 22-34 are Extracellular-facing; sequence LERQIFDFLGYQW. Residues 35 to 55 traverse the membrane as a helical segment; that stretch reads APILANFLHIMAVILGIFGTV. The Cytoplasmic segment spans residues 56–61; sequence QYRSRY. Residues 62–82 traverse the membrane as a helical segment; it reads LILYAAWLVLWVGWNAFIICF. Residues 83–146 are Extracellular-facing; the sequence is YLEVGQLSQD…GCLLDYPYIE (64 aa). The N-linked (GlcNAc...) asparagine glycan is linked to N100. A helical membrane pass occupies residues 147 to 167; sequence ALSSALQIFLALFGFVFACYV. Over 168 to 207 the chain is Cytoplasmic; it reads SKVFLEEEDSFDFIGGFDSYGYQAPQKTSHLQLQPLYTSG.

The protein belongs to the NKAIN family. Interacts with ATP1B1 C-terminus.

Its subcellular location is the cell membrane. The sequence is that of Sodium/potassium-transporting ATPase subunit beta-1-interacting protein 1 (NKAIN1) from Homo sapiens (Human).